The following is a 550-amino-acid chain: Cytokinin dehydrogenase 10 (550 aa).

An N-terminal signal peptide occupies residues 1–26 (MMPRAQLTTFLIVTSFLSTVPYLRAP). The region spanning 64-245 (VHATPNGVFR…TRARIRLEPA (182 aa)) is the FAD-binding PCMH-type domain. Residues Gly-100, Lys-101, and Gly-102 each contribute to the FAD site. His-103 bears the Pros-8alpha-FAD histidine mark. FAD contacts are provided by Ser-104, Gln-108, Asp-169, Thr-174, Ser-180, Ile-184, and Ile-235. Asn-289 carries an N-linked (GlcNAc...) asparagine glycan. FAD contacts are provided by Tyr-489, Ser-524, and Gln-527. The tract at residues 523–550 (LSPGQGIFPPPPPPSPPPPAAGEPITAS) is disordered. The span at 530 to 543 (FPPPPPPSPPPPAA) shows a compositional bias: pro residues.

Belongs to the oxygen-dependent FAD-linked oxidoreductase family. As to quaternary structure, monomer. It depends on FAD as a cofactor.

The protein localises to the secreted. The protein resides in the extracellular space. It carries out the reaction N(6)-dimethylallyladenine + A + H2O = 3-methyl-2-butenal + adenine + AH2. Catalyzes the oxidation of cytokinins, a family of N(6)-substituted adenine derivatives that are plant hormones, where the substituent is an isopentenyl group. The polypeptide is Cytokinin dehydrogenase 10 (CKX10) (Oryza sativa subsp. japonica (Rice)).